A 70-amino-acid polypeptide reads, in one-letter code: Protein SlyX homolog (70 aa).

Belongs to the SlyX family.

This chain is Protein SlyX homolog, found in Pseudoalteromonas atlantica (strain T6c / ATCC BAA-1087).